The following is a 139-amino-acid chain: Peptide methionine sulfoxide reductase MsrB (139 aa).

Positions Glu-8 to Asp-130 constitute a MsrB domain. Residues Cys-47, Cys-50, Cys-96, and Cys-99 each coordinate Zn(2+). Cys-119 functions as the Nucleophile in the catalytic mechanism.

It belongs to the MsrB Met sulfoxide reductase family. It depends on Zn(2+) as a cofactor.

The enzyme catalyses L-methionyl-[protein] + [thioredoxin]-disulfide + H2O = L-methionyl-(R)-S-oxide-[protein] + [thioredoxin]-dithiol. The chain is Peptide methionine sulfoxide reductase MsrB from Acinetobacter baylyi (strain ATCC 33305 / BD413 / ADP1).